Here is a 272-residue protein sequence, read N- to C-terminus: Dickkopf-related protein 1 (272 aa).

The signal sequence occupies residues 1 to 31; the sequence is MMVVCAAAAVRFLAVFTMMALCSLPLLGASA. O-linked (GalNAc...) serine glycosylation is present at Ser62. 10 disulfides stabilise this stretch: Cys86-Cys98, Cys92-Cys114, Cys117-Cys131, Cys124-Cys136, Cys130-Cys141, Cys195-Cys207, Cys201-Cys216, Cys206-Cys243, Cys226-Cys251, and Cys245-Cys269. A DKK-type Cys-1 region spans residues 86 to 141; it reads CAEDEECGSDEYCSSPSRGAAGVGGVQICLACRKRRKRCMRHAMCCPGNYCKNGIC. The DKK-type Cys-2 stretch occupies residues 195–269; it reads CLRSSDCAAG…ASNSSRLHTC (75 aa). N-linked (GlcNAc...) asparagine glycosylation occurs at Asn262.

Belongs to the dickkopf family. As to quaternary structure, interacts (via the C-terminal Cys-rich domain) with LRP5 (via beta-propeller regions 3 and 4); the interaction, enhanced by MESD and or KREMEN, antagonizes Wnt-mediated signaling. Interacts with LRP6. Forms a ternary complex with LRP6 and KREM1. Interacts with KREM1.

It localises to the secreted. Functionally, antagonizes canonical Wnt signaling by inhibiting LRP5/6 interaction with Wnt and by forming a ternary complex with the transmembrane protein KREMEN that promotes internalization of LRP5/6. Inhibits the pro-apoptotic function of KREMEN1 in a Wnt-independent manner, and has anti-apoptotic activity. Plays a role in limb development; attenuates Wnt signaling in the developing limb to allow normal limb patterning. This chain is Dickkopf-related protein 1 (Dkk1), found in Mus musculus (Mouse).